We begin with the raw amino-acid sequence, 333 residues long: 5-formaminoimidazole-4-carboxamide-1-(beta)-D-ribofuranosyl 5'-monophosphate synthetase (333 aa).

Histidine 10 and serine 74 together coordinate 5-amino-1-(5-phospho-beta-D-ribosyl)imidazole-4-carboxamide. The region spanning arginine 95–asparagine 324 is the ATP-grasp domain. Residues valine 125 to tyrosine 185 and glutamate 207 each bind ATP. Asparagine 230 contacts 5-amino-1-(5-phospho-beta-D-ribosyl)imidazole-4-carboxamide. The Mg(2+) site is built by glutamate 269 and glutamate 282.

This sequence belongs to the phosphohexose mutase family. The cofactor is Mg(2+). It depends on Mn(2+) as a cofactor.

The enzyme catalyses 5-amino-1-(5-phospho-beta-D-ribosyl)imidazole-4-carboxamide + formate + ATP = 5-formamido-1-(5-phospho-D-ribosyl)imidazole-4-carboxamide + ADP + phosphate. It participates in purine metabolism; IMP biosynthesis via de novo pathway; 5-formamido-1-(5-phospho-D-ribosyl)imidazole-4-carboxamide from 5-amino-1-(5-phospho-D-ribosyl)imidazole-4-carboxamide (formate route): step 1/1. Functionally, catalyzes the ATP- and formate-dependent formylation of 5-aminoimidazole-4-carboxamide-1-beta-d-ribofuranosyl 5'-monophosphate (AICAR) to 5-formaminoimidazole-4-carboxamide-1-beta-d-ribofuranosyl 5'-monophosphate (FAICAR) in the absence of folates. In Sulfolobus acidocaldarius (strain ATCC 33909 / DSM 639 / JCM 8929 / NBRC 15157 / NCIMB 11770), this protein is 5-formaminoimidazole-4-carboxamide-1-(beta)-D-ribofuranosyl 5'-monophosphate synthetase.